The primary structure comprises 412 residues: Tyrosine--tRNA ligase (412 aa).

Residue Tyr31 coordinates L-tyrosine. The 'HIGH' region motif lies at 36–45; it reads PTAASLHIGH. L-tyrosine is bound by residues Tyr162 and Gln166. Residues 222–226 carry the 'KMSKS' region motif; the sequence is KIGKT. Lys225 contacts ATP. Positions 345–412 constitute an S4 RNA-binding domain; sequence KRWIDLFVGV…KKKKLVLHLI (68 aa).

The protein belongs to the class-I aminoacyl-tRNA synthetase family. TyrS type 1 subfamily. In terms of assembly, homodimer.

It is found in the cytoplasm. It carries out the reaction tRNA(Tyr) + L-tyrosine + ATP = L-tyrosyl-tRNA(Tyr) + AMP + diphosphate + H(+). Functionally, catalyzes the attachment of tyrosine to tRNA(Tyr) in a two-step reaction: tyrosine is first activated by ATP to form Tyr-AMP and then transferred to the acceptor end of tRNA(Tyr). This chain is Tyrosine--tRNA ligase, found in Chlamydia caviae (strain ATCC VR-813 / DSM 19441 / 03DC25 / GPIC) (Chlamydophila caviae).